A 651-amino-acid polypeptide reads, in one-letter code: Beta-glucuronidase (651 aa).

A signal peptide spans 1–22 (MLRGPAAVWAALGPLLWACGLA). Residues Asn-172 and Asn-419 are each glycosylated (N-linked (GlcNAc...) asparagine). Glu-450 serves as the catalytic Proton donor. N-linked (GlcNAc...) asparagine glycosylation is present at Asn-630.

It belongs to the glycosyl hydrolase 2 family. In terms of assembly, homotetramer.

It localises to the lysosome. The catalysed reaction is a beta-D-glucuronoside + H2O = D-glucuronate + an alcohol. With respect to regulation, inhibited by L-aspartic acid. Functionally, plays an important role in the degradation of dermatan and keratan sulfates. This is Beta-glucuronidase (GUSB) from Felis catus (Cat).